The sequence spans 356 residues: Histidinol-phosphate aminotransferase (356 aa).

At Lys214 the chain carries N6-(pyridoxal phosphate)lysine.

Belongs to the class-II pyridoxal-phosphate-dependent aminotransferase family. Histidinol-phosphate aminotransferase subfamily. As to quaternary structure, homodimer. The cofactor is pyridoxal 5'-phosphate.

It catalyses the reaction L-histidinol phosphate + 2-oxoglutarate = 3-(imidazol-4-yl)-2-oxopropyl phosphate + L-glutamate. Its pathway is amino-acid biosynthesis; L-histidine biosynthesis; L-histidine from 5-phospho-alpha-D-ribose 1-diphosphate: step 7/9. This chain is Histidinol-phosphate aminotransferase, found in Escherichia coli O17:K52:H18 (strain UMN026 / ExPEC).